A 248-amino-acid polypeptide reads, in one-letter code: Lysine-rich arabinogalactan protein 19 (248 aa).

A signal peptide spans 1 to 24; the sequence is MESNSIIWSLLLASALISSFSVNA. A compositionally biased stretch (low complexity) spans 25 to 37; it reads QGPAASPVTSTTT. A disordered region spans residues 25 to 221; it reads QGPAASPVTS…APSPNTNGGN (197 aa). Composition is skewed to pro residues over residues 38–57, 67–86, and 94–171; these read APPP…PTTT, PASP…PAPK, and ATPP…PAPA. Positions 173 to 187 are enriched in basic residues; that stretch reads TKHKRKHKHKRHHHA. A compositionally biased stretch (pro residues) spans 189–203; that stretch reads APAPIPPSPPSPPVL. Ser196 carries GPI-anchor amidated serine lipidation. A propeptide spans 197–248 (removed in mature form); it reads PPSPPVLTDPQDTAPAPSPNTNGGNALNQLKGRAVMWLNTGLVILFLLAMTA.

Belongs to the lysine-rich AGP family. O-glycosylated on the hydroxyproline residues. Strongly expressed in stems, moderately expressed in flowers and roots and weakly expressed in young leaves.

Its subcellular location is the cell membrane. Functionally, proteoglycan that seems to be implicated in diverse developmental roles such as differentiation, cell-cell recognition, embryogenesis and programmed cell death. The polypeptide is Lysine-rich arabinogalactan protein 19 (AGP19) (Arabidopsis thaliana (Mouse-ear cress)).